The chain runs to 212 residues: Large ribosomal subunit protein bL25 (212 aa).

The disordered stretch occupies residues 190 to 212; sequence IAEAGDALAEPEVISKGSGEADE.

The protein belongs to the bacterial ribosomal protein bL25 family. CTC subfamily. Part of the 50S ribosomal subunit; part of the 5S rRNA/L5/L18/L25 subcomplex. Contacts the 5S rRNA. Binds to the 5S rRNA independently of L5 and L18.

In terms of biological role, this is one of the proteins that binds to the 5S RNA in the ribosome where it forms part of the central protuberance. The polypeptide is Large ribosomal subunit protein bL25 (Rhodopirellula baltica (strain DSM 10527 / NCIMB 13988 / SH1)).